Reading from the N-terminus, the 398-residue chain is Stimulator of interferon genes protein (398 aa).

Residues 1 to 16 (MSVMGEDALVPRARSR) lie on the Cytoplasmic side of the membrane. A helical membrane pass occupies residues 17–37 (LPVMCAAGLGFLTLAVAWLLD). Residues 38 to 44 (SDKFSER) are Lumenal-facing. A helical transmembrane segment spans residues 45–65 (AGIIAFGLMLERFIYCICLLA). Residues 66 to 91 (EELLFHSRQRYHGRMSEIFRACFRGS) are Cytoplasmic-facing. The helical transmembrane segment at 92–112 (GILGMCAIFLMLMLGGVSFSV) threads the bilayer. Residues 113 to 120 (KQWSHFNL) are Lumenal-facing. The helical transmembrane segment at 121-141 (MCAGYMLLNSLGVLGPAPVEI) threads the bilayer. At 142 to 398 (SEICEAKKMN…FNPSSAMKQN (257 aa)) the chain is on the cytoplasmic side. The cyclic dinucleotide-binding domain (CBD) stretch occupies residues 150-331 (MNVAHGLAWS…QNLKQQDGEI (182 aa)). 2',3'-cGAMP-binding residues include Ser159, Tyr164, Arg230, and Thr254. 3',3'-c-di-GMP contacts are provided by residues Ser159, Tyr164, 230–233 (RSYT), and Thr254. The disordered stretch occupies residues 375–398 (PQSLRSEPVETTDYFNPSSAMKQN). Positions 387 to 398 (DYFNPSSAMKQN) are enriched in polar residues.

It belongs to the STING family. As to quaternary structure, homodimer; forms a homodimer in absence of cyclic nucleotide (c-di-GMP or cGAMP). Homotetramer; in presence of cyclic nucleotide (c-di-GMP or cGAMP), forms tetramers and higher-order oligomers through side-by-side packing. Interacts (when phosphorylated) with irf3; following activation and phosphorylation by tbk1, recruits irf3. In terms of processing, phosphorylation by TBK1 leads to activation and production of IFN-beta. Following cyclic nucleotide (c-di-GMP or cGAMP)-binding, activation and translocation from the endoplasmic reticulum, STING1 is phosphorylated by tbk1, leading to recruitment of the transcription factor irf3 to induce type-I interferons and other cytokines.

The protein resides in the endoplasmic reticulum membrane. It localises to the cytoplasm. Its subcellular location is the perinuclear region. The protein localises to the endoplasmic reticulum-Golgi intermediate compartment membrane. It is found in the golgi apparatus membrane. The protein resides in the cytoplasmic vesicle. It localises to the autophagosome membrane. The enzyme catalyses H(+)(in) = H(+)(out). In terms of biological role, facilitator of innate immune signaling that acts as a sensor of cytosolic DNA from bacteria and viruses and promotes the production of type I interferon (IFN-alpha and IFN-beta). Innate immune response is triggered in response to non-CpG double-stranded DNA from viruses and bacteria delivered to the cytoplasm. Acts by binding cyclic dinucleotides: recognizes and binds cyclic di-GMP (c-di-GMP), a second messenger produced by bacteria, and cyclic GMP-AMP (cGAMP), a messenger produced by CGAS in response to DNA virus in the cytosol. Upon binding of c-di-GMP or cGAMP, STING1 oligomerizes and is able to activate both NF-kappa-B and irf3 transcription pathways to induce expression of type I interferon and exert a potent anti-viral state. Exhibits 2',3' phosphodiester linkage-specific ligand recognition: can bind both 2'-3' linked cGAMP and 3'-3' linked cGAMP but is preferentially activated by 2'-3' linked cGAMP. In addition to promote the production of type I interferons, plays a direct role in autophagy. Following cGAMP-binding, STING1 buds from the endoplasmic reticulum into COPII vesicles, which then form the endoplasmic reticulum-Golgi intermediate compartment (ERGIC). The ERGIC serves as the membrane source for LC3 lipidation, leading to formation of autophagosomes that target cytosolic DNA or DNA viruses for degradation by the lysosome. Promotes autophagy by acting as a proton channel that directs proton efflux from the Golgi to facilitate LC3 lipidation. The autophagy- and interferon-inducing activities can be uncoupled and autophagy induction is independent of TBK1 phosphorylation. The polypeptide is Stimulator of interferon genes protein (Danio rerio (Zebrafish)).